The primary structure comprises 316 residues: L-lactate dehydrogenase 3 (316 aa).

NAD(+) contacts are provided by V16, D37, R42, and Y68. Position 91 (R91) interacts with substrate. NAD(+) contacts are provided by residues S104, 121 to 123 (ASN), and T146. Residue 123 to 126 (NPVD) participates in substrate binding. 151–154 (DSSR) contributes to the substrate binding site. Beta-D-fructose 1,6-bisphosphate contacts are provided by R156 and H171. H178 functions as the Proton acceptor in the catalytic mechanism. A substrate-binding site is contributed by T233.

The protein belongs to the LDH/MDH superfamily. LDH family. Homotetramer.

It is found in the cytoplasm. It carries out the reaction (S)-lactate + NAD(+) = pyruvate + NADH + H(+). It functions in the pathway fermentation; pyruvate fermentation to lactate; (S)-lactate from pyruvate: step 1/1. Allosterically activated by fructose 1,6-bisphosphate (FBP). Catalyzes the conversion of lactate to pyruvate. This chain is L-lactate dehydrogenase 3, found in Bacillus cereus (strain ATCC 14579 / DSM 31 / CCUG 7414 / JCM 2152 / NBRC 15305 / NCIMB 9373 / NCTC 2599 / NRRL B-3711).